A 575-amino-acid polypeptide reads, in one-letter code: Chaperonin CPN60-2, mitochondrial (575 aa).

Residues 1 to 32 (MHRFASGLASKARLARKGANQIASRSSWSRNY) constitute a mitochondrion transit peptide.

It belongs to the chaperonin (HSP60) family.

Its subcellular location is the mitochondrion. Functionally, implicated in mitochondrial protein import and macromolecular assembly. May facilitate the correct folding of imported proteins. May also prevent misfolding and promote the refolding and proper assembly of unfolded polypeptides generated under stress conditions in the mitochondrial matrix. In Cucurbita maxima (Pumpkin), this protein is Chaperonin CPN60-2, mitochondrial (CPN60-2).